Here is a 41-residue protein sequence, read N- to C-terminus: MKIRNSLKSLRGRHRDNQIVRRKGRVYVINKTQKRYKARQG.

This sequence belongs to the bacterial ribosomal protein bL36 family.

The sequence is that of Large ribosomal subunit protein bL36 from Methylobacterium nodulans (strain LMG 21967 / CNCM I-2342 / ORS 2060).